The chain runs to 149 residues: Large ribosomal subunit protein bL9 (149 aa).

This sequence belongs to the bacterial ribosomal protein bL9 family.

Binds to the 23S rRNA. In Desulforamulus reducens (strain ATCC BAA-1160 / DSM 100696 / MI-1) (Desulfotomaculum reducens), this protein is Large ribosomal subunit protein bL9.